The following is a 771-amino-acid chain: MDLKESVTSSKEVPSSVLGSERRNVIDFYKTVRGGATVKVSASSPSLAAAAQSDSKQRRLLVDFPKGSGSNAQQPDLSKAVSLSMGLYMGETETKVMGNDLGFPQQGQISLPSGETDFRLLEESIANLSRSTSVPENPKNSASAVSGTPTEEFPKTQSDLSSEQENLKSQAGTNGGNVKFPPDQSTFDILKDLEFSSGSPGKERSESPWRPDLLMDESCLLSPLAGEDDPFLLEGNSNEDCKPLILPDTKPKIKDNGDGILSSSNSVPQPQVKIGKEDFIELCTPGVIKQEKLGPVYCQASFSGANIIGNKMSAISVHGVSTSGGQMYHYDMNTASLSQQQDQKPIFNVIPPIPVGSENWNRCQGSGEDNLTSLGTVNFPGRSVFSNGYSSPGLRPDVSSPPSSSSTTTGPPPKLCLVCSDELSGCHYGVLTCGSCKVFFKRAVEGQHNYLCAGRNDCIIDKIRRENCPACRYRKCLQAGMNLQARKTKKKIKGIQQATTGVSQNTSENPNKTIVPATLPQLTPTLVSLLEVIEPEVIHSGYDSTSPDSTWRIMTTLNMLGGRQVIAAVKWAKAIPGFKNLHLDDQMTLLQYSWMFLMAFALGWRSYKQSNGSLLCFAPDLIINEQRMSLPWMYDQCRYMLYVSSELKRLQVSYEEYLCMKTLLLLSSVPKEGLKSQELFDEIRMTYIKELGKAIVKREGNSSQNWQRFYQLTKLLDSLHEIVGNLLNICFKTFLDKTMNIEFPEMLAEIITNQLPKYSNGDIKKLLFHQK.

The segment at 1-415 is modulating; sequence MDLKESVTSS…STTTGPPPKL (415 aa). Threonine 8 is subject to Phosphothreonine. An Omega-N-methylarginine modification is found at arginine 22. A phosphoserine mark is found at serine 44, serine 133, serine 199, serine 207, and serine 222. The span at 129-172 shows a compositional bias: polar residues; sequence SRSTSVPENPKNSASAVSGTPTEEFPKTQSDLSSEQENLKSQAG. Residues 129 to 184 form a disordered region; it reads SRSTSVPENPKNSASAVSGTPTEEFPKTQSDLSSEQENLKSQAGTNGGNVKFPPDQ. A Glycyl lysine isopeptide (Lys-Gly) (interchain with G-Cter in SUMO2) cross-link involves residue lysine 254. Serine 263 carries the post-translational modification Phosphoserine. Residues lysine 273 and lysine 289 each participate in a glycyl lysine isopeptide (Lys-Gly) (interchain with G-Cter in SUMO); alternate cross-link. Glycyl lysine isopeptide (Lys-Gly) (interchain with G-Cter in SUMO2); alternate cross-links involve residues lysine 273 and lysine 289. A phosphoserine mark is found at serine 303 and serine 400. The segment at 390–411 is disordered; it reads SSPGLRPDVSSPPSSSSTTTGP. Over residues 400 to 409 the composition is skewed to low complexity; that stretch reads SPPSSSSTTT. A Glycyl lysine isopeptide (Lys-Gly) (interchain with G-Cter in ubiquitin) cross-link involves residue lysine 414. 2 consecutive NR C4-type zinc fingers follow at residues 416 to 436 and 452 to 476; these read CLVC…CGSC and CAGR…YRKC. Positions 416 to 481 form a DNA-binding region, nuclear receptor; it reads CLVCSDELSG…RYRKCLQAGM (66 aa). N6-acetyllysine occurs at positions 475, 487, 489, and 490. Residues 480–771 form an interaction with CLOCK region; it reads GMNLQARKTK…DIKKLLFHQK (292 aa). A hinge region spans residues 482-517; sequence NLQARKTKKKIKGIQQATTGVSQNTSENPNKTIVPA. The NR LBD domain occupies 518–752; that stretch reads TLPQLTPTLV…FPEMLAEIIT (235 aa). Residues 526-691 are interaction with CRY1; the sequence is LVSLLEVIEP…EIRMTYIKEL (166 aa). A Glycyl lysine isopeptide (Lys-Gly) (interchain with G-Cter in SUMO) cross-link involves residue lysine 697.

This sequence belongs to the nuclear hormone receptor family. NR3 subfamily. In terms of assembly, heteromultimeric cytoplasmic complex with HSP90AA1, HSPA1A/HSPA1B, and FKBP5 or another immunophilin such as PPID, STIP1, or the immunophilin homolog PPP5C. Upon ligand binding FKBP5 dissociates from the complex and FKBP4 takes its place, thereby linking the complex to dynein and mediating transport to the nucleus, where the complex dissociates. Probably forms a complex composed of chaperones HSP90 and HSP70, co-chaperones CDC37, PPP5C, TSC1 and client protein TSC2, CDK4, AKT, RAF1 and NR3C1; this complex does not contain co-chaperones STIP1/HOP and PTGES3/p23. Directly interacts with UNC45A. Binds to DNA as a homodimer, and as heterodimer with NR3C2 or the retinoid X receptor. Binds STAT5A and STAT5B homodimers and heterodimers. Interacts with NRIP1, POU2F1, POU2F2 and TRIM28. Interacts with several coactivator complexes, including the SMARCA4 complex, CREBBP/EP300, TADA2L (Ada complex) and p160 coactivators such as NCOA2 and NCOA6. Interaction with BAG1 inhibits transactivation. Interacts with HEXIM1 and TGFB1I1. Interacts with NCOA1. Interacts with NCOA3, SMARCA4, SMARCC1, SMARCD1, and SMARCE1. Interacts with CLOCK, CRY1 and CRY2 in a ligand-dependent fashion. Interacts with CIART. Interacts with RWDD3. Interacts with UBE2I/UBC9 and this interaction is enhanced in the presence of RWDD3. Interacts with GRIP1. Interacts with NR4A3 (via nuclear receptor DNA-binding domain), represses transcription activity of NR4A3 on the POMC promoter Nur response element (NurRE). Directly interacts with PNRC2 to attract and form a complex with UPF1 and DCP1A; the interaction leads to rapid mRNA degradation. Interacts with GSK3B. Interacts with FNIP1 and FNIP2. Interacts (via C-terminus) with HNRNPU (via C-terminus). Interacts with MCM3AP. Interacts (via domain NR LBD) with HSP90AA1 and HSP90AB1. In the absence of hormonal ligand, interacts with TACC1. Interacts (via NR LBD domain) with ZNF764 (via KRAB domain); the interaction regulates transcription factor activity of NR3C1 by directing its actions toward certain biologic pathways. In terms of processing, acetylation by CLOCK reduces its binding to glucocorticoid response elements and its transcriptional activity. Increased proteasome-mediated degradation in response to glucocorticoids. Post-translationally, phosphorylated in the absence of hormone; becomes hyperphosphorylated in the presence of glucocorticoid. The Ser-199, Ser-222 and Ser-400-phosphorylated forms are mainly cytoplasmic, and the Ser-207-phosphorylated form is nuclear. Phosphorylation at Ser-207 increases transcriptional activity. Phosphorylation at Ser-199, Ser-222 and Ser-400 decreases signaling capacity. Phosphorylation at Ser-400 may protect from glucocorticoid-induced apoptosis. Phosphorylation at Ser-199 and Ser-207 is not required in regulation of chromosome segregation. May be dephosphorylated by PPP5C, attenuates NR3C1 action. In terms of processing, ubiquitinated by UBR5, leading to its degradation: UBR5 specifically recognizes and binds ligand-bound NR3C1 when it is not associated with coactivators (NCOAs). In presence of NCOAs, the UBR5-degron is not accessible, preventing its ubiquitination and degradation. Sumoylation at Lys-273 and Lys-289 negatively regulates its transcriptional activity. Sumoylation at Lys-697 positively regulates its transcriptional activity in the presence of RWDD3. Sumoylation at Lys-273 and Lys-289 is dispensable whereas sumoylation at Lys-697 is critical for the stimulatory effect of RWDD3 on its transcriptional activity. Heat shock increases sumoylation in a RWDD3-dependent manner.

Its subcellular location is the cytoplasm. The protein localises to the nucleus. The protein resides in the mitochondrion. It localises to the cytoskeleton. It is found in the spindle. Its subcellular location is the microtubule organizing center. The protein localises to the centrosome. The protein resides in the chromosome. It localises to the nucleoplasm. Receptor for glucocorticoids (GC). Has a dual mode of action: as a transcription factor that binds to glucocorticoid response elements (GRE), both for nuclear and mitochondrial DNA, and as a modulator of other transcription factors. Affects inflammatory responses, cellular proliferation and differentiation in target tissues. Involved in chromatin remodeling. Plays a role in rapid mRNA degradation by binding to the 5' UTR of target mRNAs and interacting with PNRC2 in a ligand-dependent manner which recruits the RNA helicase UPF1 and the mRNA-decapping enzyme DCP1A, leading to RNA decay. Could act as a coactivator for STAT5-dependent transcription upon growth hormone (GH) stimulation and could reveal an essential role of hepatic GR in the control of body growth. Mediates glucocorticoid-induced apoptosis. Promotes accurate chromosome segregation during mitosis. May act as a tumor suppressor. May play a negative role in adipogenesis through the regulation of lipolytic and antilipogenic gene expression. In Cavia porcellus (Guinea pig), this protein is Glucocorticoid receptor (NR3C1).